A 1053-amino-acid polypeptide reads, in one-letter code: Sal-like protein 4 (1053 aa).

The segment at Met-1–Thr-62 is disordered. Over residues Glu-20–Pro-46 the composition is skewed to low complexity. Phosphoserine is present on Ser-57. A C2H2-type 1; atypical zinc finger spans residues His-72–Cys-94. The interval Ser-116–Ala-149 is disordered. Residues Lys-130–Ala-149 show a composition bias toward basic and acidic residues. Lys-156 participates in a covalent cross-link: Glycyl lysine isopeptide (Lys-Gly) (interchain with G-Cter in SUMO1); alternate. Lys-156 is covalently cross-linked (Glycyl lysine isopeptide (Lys-Gly) (interchain with G-Cter in SUMO2); alternate). Glycyl lysine isopeptide (Lys-Gly) (interchain with G-Cter in SUMO2) cross-links involve residues Lys-175, Lys-190, and Lys-290. Ser-307 carries the phosphoserine modification. A Glycyl lysine isopeptide (Lys-Gly) (interchain with G-Cter in SUMO1); alternate cross-link involves residue Lys-316. Lys-316 is covalently cross-linked (Glycyl lysine isopeptide (Lys-Gly) (interchain with G-Cter in SUMO2); alternate). Lys-372 is covalently cross-linked (Glycyl lysine isopeptide (Lys-Gly) (interchain with G-Cter in SUMO2)). Lys-374 participates in a covalent cross-link: Glycyl lysine isopeptide (Lys-Gly) (interchain with G-Cter in SUMO1); alternate. Lys-374 is covalently cross-linked (Glycyl lysine isopeptide (Lys-Gly) (interchain with G-Cter in SUMO2); alternate). C2H2-type zinc fingers lie at residues His-382–His-404 and Phe-410–His-432. Lys-436 is covalently cross-linked (Glycyl lysine isopeptide (Lys-Gly) (interchain with G-Cter in SUMO2)). Residues Val-483–Lys-496 are compositionally biased toward polar residues. The disordered stretch occupies residues Val-483 to Ser-546. A Phosphothreonine modification is found at Thr-541. A Glycyl lysine isopeptide (Lys-Gly) (interchain with G-Cter in SUMO2) cross-link involves residue Lys-550. C2H2-type zinc fingers lie at residues Asn-566–His-588 and Phe-594–His-616. Glycyl lysine isopeptide (Lys-Gly) (interchain with G-Cter in SUMO2) cross-links involve residues Lys-597 and Lys-623. The C2H2-type 6 zinc finger occupies His-626–His-648. Disordered stretches follow at residues Glu-694–Ser-714, Val-736–Ser-776, and Leu-788–Thr-828. Low complexity predominate over residues Ser-698–Val-708. Composition is skewed to polar residues over residues Leu-743–Ser-776 and Leu-788–Ser-797. A phosphoserine mark is found at Ser-776 and Ser-789. A compositionally biased stretch (basic and acidic residues) spans Glu-810–Gly-821. Lys-838 is covalently cross-linked (Glycyl lysine isopeptide (Lys-Gly) (interchain with G-Cter in SUMO1); alternate). Lys-838 participates in a covalent cross-link: Glycyl lysine isopeptide (Lys-Gly) (interchain with G-Cter in SUMO2); alternate. Ser-852 carries the post-translational modification Phosphoserine. The segment at His-870 to His-892 adopts a C2H2-type 7 zinc-finger fold. A Glycyl lysine isopeptide (Lys-Gly) (interchain with G-Cter in SUMO2) cross-link involves residue Lys-896. A C2H2-type 8 zinc finger spans residues Phe-898–His-920. Glycyl lysine isopeptide (Lys-Gly) (interchain with G-Cter in SUMO2) cross-links involve residues Lys-932 and Lys-947. Residues Gly-1018 to His-1039 are disordered. At Ser-1019 the chain carries Phosphoserine.

The protein belongs to the sal C2H2-type zinc-finger protein family. As to quaternary structure, interacts with POU5F1/OCT4. Interacts with NANOG. Interacts with BEND3. Interacts with NSD2 (via PHD-type zinc fingers 1, 2 and 3). Interacts with NRBP1. Isoform SALL4B exists primarily as a ubiquitinated form. Post-translationally, sumoylation with both SUMO1 and SUMO2 regulates the stability, subcellular localization, transcriptional activity, and may reduce interaction with POU5F1/OCT4. In terms of tissue distribution, expressed in testis. Constitutively expressed in acute myeloid leukemia (AML).

It is found in the cytoplasm. The protein localises to the nucleus. Transcription factor with a key role in the maintenance and self-renewal of embryonic and hematopoietic stem cells. The protein is Sal-like protein 4 (SALL4) of Homo sapiens (Human).